A 646-amino-acid polypeptide reads, in one-letter code: Wee1-like protein kinase (646 aa).

The disordered stretch occupies residues 1-181; sequence MSFLSRQQPP…GTPPHKTFRK (181 aa). Residues 32–43 are compositionally biased toward acidic residues; it reads DCEEEEEEEEEE. Residue Ser-53 is modified to Phosphoserine; by PLK1. 2 positions are modified to phosphoserine: Ser-78 and Ser-85. Positions 94–103 are enriched in low complexity; it reads LLPGACPGAD. Ser-123 is subject to Phosphoserine; by CDK1. 5 positions are modified to phosphoserine: Ser-127, Ser-137, Ser-139, Ser-150, and Ser-165. Residues 158–170 are compositionally biased toward basic and acidic residues; sequence RAGEGRRSPRPDH. Residues Thr-187, Thr-190, and Thr-239 each carry the phosphothreonine modification. Ser-270, Ser-307, and Ser-312 each carry phosphoserine. The 271-residue stretch at 299 to 569 folds into the Protein kinase domain; the sequence is FHELEKIGSG…AMALVKHSVL (271 aa). Residues 305–313 and Lys-328 contribute to the ATP site; that span reads IGSGEFGSV. Asn-342 is a Mg(2+) binding site. The active-site Proton acceptor is the Asp-426. Mg(2+)-binding residues include Asn-431, Asp-463, and Gly-465. The residue at position 642 (Ser-642) is a Phosphoserine; by BRSK1 and BRSK2.

This sequence belongs to the protein kinase superfamily. Ser/Thr protein kinase family. WEE1 subfamily. It depends on Mg(2+) as a cofactor. In terms of processing, phosphorylated during M and G1 phases. Also autophosphorylated. Phosphorylation at Ser-642 by BRSK1 and BRSK2 in post-mitotic neurons, leads to down-regulate WEE1 activity in polarized neurons. Phosphorylated at Ser-53 and Ser-123 by PLK1 and CDK1, respectively, generating an signal for degradation that can be recognized by the SCF(BTRC) complex, leading to its ubiquitination and degradation at the onset of G2/M phase. Post-translationally, dephosphorylated at Thr-239 by CTDP1. Dephosphorylated at Ser-53 and Ser-123 by the serine/threonine-protein phosphatase 2A preventing its ubiquitin-mediated degradation. Ubiquitinated and degraded at the onset of G2/M phase.

Its subcellular location is the nucleus. The catalysed reaction is L-tyrosyl-[protein] + ATP = O-phospho-L-tyrosyl-[protein] + ADP + H(+). Its activity is regulated as follows. Synthesis is increased during S and G2 phases, presumably by an increase in transcription; activity is decreased by phosphorylation during M phase. Protein levels fall in M phase as a result of decreased synthesis combined with degradation. Activity seems to be negatively regulated by phosphorylation upon entry into mitosis, although N-terminal phosphorylation might also regulate the protein stability via protection from proteolysis or might regulate the subcellular location. In terms of biological role, acts as a negative regulator of entry into mitosis (G2 to M transition) by protecting the nucleus from cytoplasmically activated cyclin B1-complexed CDK1 before the onset of mitosis by mediating phosphorylation of CDK1 on 'Tyr-15'. Specifically phosphorylates and inactivates cyclin B1-complexed CDK1 reaching a maximum during G2 phase and a minimum as cells enter M phase. Phosphorylation of cyclin B1-CDK1 occurs exclusively on 'Tyr-15' and phosphorylation of monomeric CDK1 does not occur. Its activity increases during S and G2 phases and decreases at M phase when it is hyperphosphorylated. A correlated decrease in protein level occurs at M/G1 phase, probably due to its degradation. The protein is Wee1-like protein kinase of Homo sapiens (Human).